A 438-amino-acid chain; its full sequence is Nucleolar protein 12 (438 aa).

Disordered stretches follow at residues 1-28 (MGET…VDPT) and 60-94 (ANGV…LNDS). The span at 60-71 (ANGVEEAAETIE) shows a compositional bias: acidic residues. A phosphoserine mark is found at Ser94 and Ser95. A disordered region spans residues 108–146 (AEEDEEKDKDSAGLINDEEDKSPAKQSVLEERTSQEDVK). The segment covering 135–146 (VLEERTSQEDVK) has biased composition (basic and acidic residues). RRM domains lie at 164–262 (KTVF…SVSH) and 270–348 (RCVF…RAKS). Basic residues-rich tracts occupy residues 346-357 (AKSTKPKSITRS) and 402-412 (AKKKVNKKRKE). Disordered regions lie at residues 346-366 (AKST…KTRT) and 390-438 (EGHR…KKDK).

The protein belongs to the RRM RBM34 family.

Its subcellular location is the nucleus. The protein localises to the nucleolus. Functionally, involved in pre-25S rRNA processing. The sequence is that of Nucleolar protein 12 (nop12) from Schizosaccharomyces pombe (strain 972 / ATCC 24843) (Fission yeast).